The chain runs to 258 residues: Methylthioribulose-1-phosphate dehydratase (258 aa).

A disordered region spans residues 1 to 21; it reads MCSPTTENNNNNNDHLVQSSD. Substrate is bound at residue C105. Residues H123 and H125 each contribute to the Zn(2+) site. E153 functions as the Proton donor/acceptor in the catalytic mechanism. H210 lines the Zn(2+) pocket.

The protein belongs to the aldolase class II family. MtnB subfamily. It depends on Zn(2+) as a cofactor.

The protein localises to the cytoplasm. The catalysed reaction is 5-(methylsulfanyl)-D-ribulose 1-phosphate = 5-methylsulfanyl-2,3-dioxopentyl phosphate + H2O. The protein operates within amino-acid biosynthesis; L-methionine biosynthesis via salvage pathway; L-methionine from S-methyl-5-thio-alpha-D-ribose 1-phosphate: step 2/6. Functionally, catalyzes the dehydration of methylthioribulose-1-phosphate (MTRu-1-P) into 2,3-diketo-5-methylthiopentyl-1-phosphate (DK-MTP-1-P). The chain is Methylthioribulose-1-phosphate dehydratase from Neurospora crassa (strain ATCC 24698 / 74-OR23-1A / CBS 708.71 / DSM 1257 / FGSC 987).